A 203-amino-acid polypeptide reads, in one-letter code: ATP phosphoribosyltransferase (203 aa).

It belongs to the ATP phosphoribosyltransferase family. Short subfamily. Heteromultimer composed of HisG and HisZ subunits.

The protein localises to the cytoplasm. It catalyses the reaction 1-(5-phospho-beta-D-ribosyl)-ATP + diphosphate = 5-phospho-alpha-D-ribose 1-diphosphate + ATP. It participates in amino-acid biosynthesis; L-histidine biosynthesis; L-histidine from 5-phospho-alpha-D-ribose 1-diphosphate: step 1/9. Its function is as follows. Catalyzes the condensation of ATP and 5-phosphoribose 1-diphosphate to form N'-(5'-phosphoribosyl)-ATP (PR-ATP). Has a crucial role in the pathway because the rate of histidine biosynthesis seems to be controlled primarily by regulation of HisG enzymatic activity. The protein is ATP phosphoribosyltransferase of Campylobacter fetus subsp. fetus (strain 82-40).